We begin with the raw amino-acid sequence, 158 residues long: NAD(P)H-quinone oxidoreductase subunit J, chloroplastic (158 aa).

This sequence belongs to the complex I 30 kDa subunit family. As to quaternary structure, NDH is composed of at least 16 different subunits, 5 of which are encoded in the nucleus.

It is found in the plastid. Its subcellular location is the chloroplast thylakoid membrane. The catalysed reaction is a plastoquinone + NADH + (n+1) H(+)(in) = a plastoquinol + NAD(+) + n H(+)(out). It carries out the reaction a plastoquinone + NADPH + (n+1) H(+)(in) = a plastoquinol + NADP(+) + n H(+)(out). NDH shuttles electrons from NAD(P)H:plastoquinone, via FMN and iron-sulfur (Fe-S) centers, to quinones in the photosynthetic chain and possibly in a chloroplast respiratory chain. The immediate electron acceptor for the enzyme in this species is believed to be plastoquinone. Couples the redox reaction to proton translocation, and thus conserves the redox energy in a proton gradient. This chain is NAD(P)H-quinone oxidoreductase subunit J, chloroplastic, found in Cicer arietinum (Chickpea).